A 579-amino-acid polypeptide reads, in one-letter code: GPI alpha-1,2-mannosyltransferase 4 (579 aa).

8 helical membrane-spanning segments follow: residues 131–151, 156–173, 180–200, 216–236, 258–278, 369–389, 391–411, and 416–436; these read LLLT…APPM, WNAL…VFYT, IEGL…TWGP, LGGI…FAVV, ALVL…TDSW, YLLL…HQEA, FLIP…QPVP, and VVLF…GGLV.

It belongs to the glycosyltransferase 22 family. PIGZ subfamily. In terms of tissue distribution, widely expressed at low level, with highest level in brain and colon.

It is found in the endoplasmic reticulum membrane. It functions in the pathway glycolipid biosynthesis; glycosylphosphatidylinositol-anchor biosynthesis. Its function is as follows. Alpha-1,2-mannosyltransferase that catalyzes the transfer of the fourth mannose, via an alpha-1,2 bond, from a dolichol-phosphate-mannose (Dol-P-Man) to an alpha-D-Man-(1-&gt;2)-alpha-D-Man-(1-&gt;6)-2-PEtn-alpha-D-Man-(1-&gt;4)-alpha-D-GlcN-(1-&gt;6)-(1-radyl,2-acyl-sn-glycero-3-phospho)-2-acyl-inositol (also termed H6) intermediate and participates in the twelfth step of the glycosylphosphatidylinositol-anchor biosynthesis. The presence of a fourth mannose in GPI is facultative, suggesting that it only exists in some tissues. The polypeptide is GPI alpha-1,2-mannosyltransferase 4 (Homo sapiens (Human)).